The sequence spans 300 residues: ATP-dependent (S)-NAD(P)H-hydrate dehydratase (300 aa).

The region spanning 7–289 (IEARLKSIIP…ESIPSVFDQV (283 aa)) is the YjeF C-terminal domain. Residues glycine 107 and 160–166 (NVMEYRR) contribute to the (6S)-NADPHX site. Residues 194–198 (KGQVD) and 213–222 (GSPRRCGGQG) each bind ATP. Residue aspartate 223 coordinates (6S)-NADPHX.

Belongs to the NnrD/CARKD family. Mg(2+) is required as a cofactor.

It carries out the reaction (6S)-NADHX + ATP = ADP + phosphate + NADH + H(+). It catalyses the reaction (6S)-NADPHX + ATP = ADP + phosphate + NADPH + H(+). Catalyzes the dehydration of the S-form of NAD(P)HX at the expense of ATP, which is converted to ADP. Together with NAD(P)HX epimerase, which catalyzes the epimerization of the S- and R-forms, the enzyme allows the repair of both epimers of NAD(P)HX, a damaged form of NAD(P)H that is a result of enzymatic or heat-dependent hydration. This is ATP-dependent (S)-NAD(P)H-hydrate dehydratase from Entamoeba histolytica (strain ATCC 30459 / HM-1:IMSS / ABRM).